The sequence spans 400 residues: tRNA-specific 2-thiouridylase MnmA (400 aa).

ATP-binding positions include 19–26 (AMSGGVDS) and leucine 45. The active-site Nucleophile is cysteine 113. A disulfide bridge links cysteine 113 with cysteine 210. Glycine 137 is a binding site for ATP. The tract at residues 160–162 (RDQ) is interaction with tRNA. Cysteine 210 functions as the Cysteine persulfide intermediate in the catalytic mechanism.

It belongs to the MnmA/TRMU family.

It localises to the cytoplasm. The enzyme catalyses S-sulfanyl-L-cysteinyl-[protein] + uridine(34) in tRNA + AH2 + ATP = 2-thiouridine(34) in tRNA + L-cysteinyl-[protein] + A + AMP + diphosphate + H(+). Its function is as follows. Catalyzes the 2-thiolation of uridine at the wobble position (U34) of tRNA, leading to the formation of s(2)U34. In Nitrobacter hamburgensis (strain DSM 10229 / NCIMB 13809 / X14), this protein is tRNA-specific 2-thiouridylase MnmA.